The chain runs to 230 residues: Cysteine S-methyltransferase OspZ (230 aa).

The interaction with host proteins TAB2, TAB3 and ZRANB3 stretch occupies residues 49-52; sequence GITR. S-adenosyl-L-methionine-binding residues include alanine 92, serine 98, arginine 107, glutamine 111, tyrosine 204, and glutamate 208.

This sequence belongs to the NleE/OspZ family. In terms of assembly, monomer.

It is found in the secreted. It localises to the host cytoplasm. The protein resides in the host nucleus. It catalyses the reaction L-cysteinyl-[protein] + S-adenosyl-L-methionine = S-methyl-L-cysteinyl-[protein] + S-adenosyl-L-homocysteine + H(+). In terms of biological role, cysteine methyltransferase effector that inhibits host cell NF-kappa-B activation by preventing nuclear translocation of host protein RELA/p65. Acts by mediating cysteine methylation of host proteins TAB2 and TAB3: methylation of a conserved cysteine residue of the RanBP2-type zinc finger (NZF) of TAB2 and TAB3 disrupts zinc-binding, thereby inactivating the ubiquitin chain-binding activity of TAB2 and TAB3, leading to NF-kappa-B inactivation. Also mediates cysteine methylation of host protein ZRANB3, inactivating its ability to bind ubiquitin chains. The chain is Cysteine S-methyltransferase OspZ from Shigella boydii.